Reading from the N-terminus, the 821-residue chain is Centrosomal protein of 95 kDa (821 aa).

Disordered regions lie at residues 310-354 (TLCK…FPQK), 390-474 (ATGE…DTHH), and 514-550 (KEAFAKGTTKQSQVQKIYSRKTAAPTPKGGLLKSSKA). Basic and acidic residues-rich tracts occupy residues 325-340 (ESSKTRRLSKGERSEN) and 390-410 (ATGEAHGKDGGAGDEEAHSAN). Residues 427-441 (RKPRPGFSMHRKAPY) are compositionally biased toward basic residues. Phosphoserine occurs at positions 445, 447, and 449. Coiled-coil stretches lie at residues 578–627 (LTKM…VKKE) and 695–789 (LQIQ…DDDA).

It localises to the cytoplasm. The protein resides in the cytoskeleton. It is found in the microtubule organizing center. The protein localises to the centrosome. Its subcellular location is the spindle pole. In Rattus norvegicus (Rat), this protein is Centrosomal protein of 95 kDa (Cep95).